The primary structure comprises 378 residues: Alcohol dehydrogenase 1 (378 aa).

C48 serves as a coordination point for Zn(2+). Residue 49–53 (HTDVL) coordinates NAD(+). Zn(2+) contacts are provided by H69, C99, C102, C105, C113, and C177. NAD(+) is bound by residues 202–207 (GIGTVG), D226, K231, 274–276 (TGV), 297–299 (IGA), and 321–323 (TTF).

Belongs to the zinc-containing alcohol dehydrogenase family. Class-IV subfamily. In terms of assembly, homodimer. The cofactor is Zn(2+). Expressed in flowers and disk florets.

It participates in isoprenoid biosynthesis. In Tanacetum cinerariifolium (Dalmatian daisy), this protein is Alcohol dehydrogenase 1.